The chain runs to 56 residues: MLRWTITFLVIALIAAVLGFGGIAGAAAGIAKIIFFIFLILLVISLVSGALRGKKP.

2 helical membrane-spanning segments follow: residues 6-26 (ITFLVIALIAAVLGFGGIAGA) and 27-47 (AAGIAKIIFFIFLILLVISLV).

The protein belongs to the UPF0391 family.

The protein resides in the cell membrane. In Pseudoalteromonas translucida (strain TAC 125), this protein is UPF0391 membrane protein PSHAa0537.